Consider the following 357-residue polypeptide: Phosphoribosylformylglycinamidine cyclo-ligase (357 aa).

It belongs to the AIR synthase family.

It localises to the cytoplasm. It carries out the reaction 2-formamido-N(1)-(5-O-phospho-beta-D-ribosyl)acetamidine + ATP = 5-amino-1-(5-phospho-beta-D-ribosyl)imidazole + ADP + phosphate + H(+). It functions in the pathway purine metabolism; IMP biosynthesis via de novo pathway; 5-amino-1-(5-phospho-D-ribosyl)imidazole from N(2)-formyl-N(1)-(5-phospho-D-ribosyl)glycinamide: step 2/2. The sequence is that of Phosphoribosylformylglycinamidine cyclo-ligase from Rhizobium leguminosarum.